The following is a 552-amino-acid chain: Cation transporter HKT1;1 (552 aa).

The Cytoplasmic portion of the chain corresponds to 1–70; that stretch reads MHPPSLVLDT…QSYSFLVCKS (70 aa). Transmembrane regions (helical) follow at residues 71–91 and 133–153; these read NPLV…FLAL and LWVL…MLGL. Over 154 to 221 the chain is Cytoplasmic; the sequence is YFNNANANRN…TYNPCAVLVR (68 aa). Helical transmembrane passes span 222-242 and 291-311; these read IVTG…IIYF and VLLL…SPLL. Over 312–348 the chain is Cytoplasmic; the sequence is RLCVWVLGKVSGKAEYAYILQHPGETGYKHLHVRRNS. The next 2 helical transmembrane spans lie at 349 to 369 and 402 to 422; these read VYIV…ICSF and ILDI…VMYL. The Cytoplasmic portion of the chain corresponds to 423–448; sequence PSDASFLTANADNQPLTDKKTNSISR. A run of 2 helical transmembrane segments spans residues 449-471 and 524-544; these read ALWR…LACI and GFVG…MFLG. At 545-552 the chain is on the cytoplasmic side; it reads RLKEFILK.

Belongs to the TrkH potassium transport family. HKT (TC 2.A.38.3) subfamily. As to expression, expressed in shoots. In roots, expressed in epidermis, exodermis, cortex, and sieve elements and companion cells of phloem. In mature leaves, expressed in large highly vacuolated cells of the adaxial epidermis, phloem and xylem.

It localises to the membrane. The enzyme catalyses Na(+)(in) = Na(+)(out). In terms of biological role, functions as a low-affinity sodium transporter. This chain is Cation transporter HKT1;1, found in Oryza sativa subsp. japonica (Rice).